The primary structure comprises 184 residues: UPF0149 protein PSPTO_5224 (184 aa).

Belongs to the UPF0149 family.

This is UPF0149 protein PSPTO_5224 from Pseudomonas syringae pv. tomato (strain ATCC BAA-871 / DC3000).